We begin with the raw amino-acid sequence, 210 residues long: Prolactin (210 aa).

The N-terminal stretch at 1-23 (MARRSQGTKLHLAVLCLVVSCHA) is a signal peptide. Cystine bridges form between C69–C183 and C200–C210.

It belongs to the somatotropin/prolactin family. Pituitary gland.

It localises to the secreted. The sequence is that of Prolactin (prl) from Coregonus autumnalis (Arctic cisco).